A 208-amino-acid polypeptide reads, in one-letter code: MVEFVKICGVKTMDELRLVERYADATGVVVNSRSKRKVPLKTAAELIEMAEIPIYLVSTMKTFPEWANAVEKTGAEYIQVHSDMHPKAVNRLKDEYGVSVMKAFMVPRESDDPAEDAERLLELIGQYEVDKILLDTGVGSGRRHDYRVSAIIAKEYPIVLAGGLTPENVGEAIRWVKPAGVDVSSGVERNGVKDRVLIEAFMAVVRNG.

Belongs to the TrpF family.

The enzyme catalyses N-(5-phospho-beta-D-ribosyl)anthranilate = 1-(2-carboxyphenylamino)-1-deoxy-D-ribulose 5-phosphate. The protein operates within amino-acid biosynthesis; L-tryptophan biosynthesis; L-tryptophan from chorismate: step 3/5. The polypeptide is N-(5'-phosphoribosyl)anthranilate isomerase (trpF) (Thermococcus kodakarensis (strain ATCC BAA-918 / JCM 12380 / KOD1) (Pyrococcus kodakaraensis (strain KOD1))).